Here is an 811-residue protein sequence, read N- to C-terminus: Bifunctional enzyme MurC/Ddl (811 aa).

The tract at residues 1 to 450 is UDP-N-acetylmuramate--alanine ligase; that stretch reads MNRKNHYHFI…GNALKDFEPK (450 aa). ATP is bound by residues 111–117 and 607–662; these read GSHGKTT and LETF…SREI. The interval 451 to 811 is D-alanine--D-alanine ligase; that stretch reads KLSVGVVCGG…NKQCLLTAKS (361 aa). One can recognise an ATP-grasp domain in the interval 574–785; it reads KRLAASVGVP…FEQIVHQLII (212 aa). Asp739, Glu752, and Asn754 together coordinate Mg(2+).

In the N-terminal section; belongs to the MurCDEF family. The protein in the C-terminal section; belongs to the D-alanine--D-alanine ligase family. Mg(2+) is required as a cofactor. Mn(2+) serves as cofactor.

It is found in the cytoplasm. It catalyses the reaction UDP-N-acetyl-alpha-D-muramate + L-alanine + ATP = UDP-N-acetyl-alpha-D-muramoyl-L-alanine + ADP + phosphate + H(+). The catalysed reaction is 2 D-alanine + ATP = D-alanyl-D-alanine + ADP + phosphate + H(+). It functions in the pathway cell wall biogenesis; peptidoglycan biosynthesis. This Chlamydia caviae (strain ATCC VR-813 / DSM 19441 / 03DC25 / GPIC) (Chlamydophila caviae) protein is Bifunctional enzyme MurC/Ddl (murC/ddlA).